A 268-amino-acid polypeptide reads, in one-letter code: Pantothenate synthetase (268 aa).

Position 18–25 (18–25) interacts with ATP; sequence MGYLHEGH. Catalysis depends on His-25, which acts as the Proton donor. Gln-49 is a binding site for (R)-pantoate. Beta-alanine is bound at residue Gln-49. 135–138 serves as a coordination point for ATP; the sequence is GQKD. (R)-pantoate is bound at residue Gln-141. Residues Val-164 and 172-175 each bind ATP; that span reads LSSR.

Belongs to the pantothenate synthetase family. In terms of assembly, homodimer.

It is found in the cytoplasm. It carries out the reaction (R)-pantoate + beta-alanine + ATP = (R)-pantothenate + AMP + diphosphate + H(+). It participates in cofactor biosynthesis; (R)-pantothenate biosynthesis; (R)-pantothenate from (R)-pantoate and beta-alanine: step 1/1. Its function is as follows. Catalyzes the condensation of pantoate with beta-alanine in an ATP-dependent reaction via a pantoyl-adenylate intermediate. The chain is Pantothenate synthetase from Dehalococcoides mccartyi (strain ATCC BAA-2266 / KCTC 15142 / 195) (Dehalococcoides ethenogenes (strain 195)).